The primary structure comprises 66 residues: Conotoxin Cal6.38 (66 aa).

An N-terminal signal peptide occupies residues M1–A22. 3 disulfides stabilise this stretch: C38-C55, C45-C59, and C54-C64.

The protein belongs to the conotoxin O1 superfamily. Expressed by the venom duct.

It localises to the secreted. Its function is as follows. Probable neurotoxin. This chain is Conotoxin Cal6.38, found in Californiconus californicus (California cone).